The chain runs to 79 residues: Small ribosomal subunit protein bS18c (79 aa).

This sequence belongs to the bacterial ribosomal protein bS18 family. As to quaternary structure, part of the 30S ribosomal subunit.

It is found in the plastid. The protein localises to the chloroplast. The chain is Small ribosomal subunit protein bS18c from Chaetosphaeridium globosum (Charophycean green alga).